We begin with the raw amino-acid sequence, 166 residues long: 2-C-methyl-D-erythritol 2,4-cyclodiphosphate synthase (166 aa).

Asp-15 and His-17 together coordinate a divalent metal cation. 4-CDP-2-C-methyl-D-erythritol 2-phosphate-binding positions include 15–17 and 43–44; these read DVH and HS. An a divalent metal cation-binding site is contributed by His-51. Residues 65–67, 141–144, and Arg-151 each bind 4-CDP-2-C-methyl-D-erythritol 2-phosphate; these read DIG and TTNE.

Belongs to the IspF family. In terms of assembly, homotrimer. Requires a divalent metal cation as cofactor.

It catalyses the reaction 4-CDP-2-C-methyl-D-erythritol 2-phosphate = 2-C-methyl-D-erythritol 2,4-cyclic diphosphate + CMP. The protein operates within isoprenoid biosynthesis; isopentenyl diphosphate biosynthesis via DXP pathway; isopentenyl diphosphate from 1-deoxy-D-xylulose 5-phosphate: step 4/6. Involved in the biosynthesis of isopentenyl diphosphate (IPP) and dimethylallyl diphosphate (DMAPP), two major building blocks of isoprenoid compounds. Catalyzes the conversion of 4-diphosphocytidyl-2-C-methyl-D-erythritol 2-phosphate (CDP-ME2P) to 2-C-methyl-D-erythritol 2,4-cyclodiphosphate (ME-CPP) with a corresponding release of cytidine 5-monophosphate (CMP). The protein is 2-C-methyl-D-erythritol 2,4-cyclodiphosphate synthase of Synechococcus sp. (strain CC9311).